The primary structure comprises 441 residues: Glutamate-1-semialdehyde 2,1-aminomutase (441 aa).

The residue at position 273 (K273) is an N6-(pyridoxal phosphate)lysine.

The protein belongs to the class-III pyridoxal-phosphate-dependent aminotransferase family. HemL subfamily. The cofactor is pyridoxal 5'-phosphate.

It localises to the cytoplasm. The enzyme catalyses (S)-4-amino-5-oxopentanoate = 5-aminolevulinate. It functions in the pathway porphyrin-containing compound metabolism; protoporphyrin-IX biosynthesis; 5-aminolevulinate from L-glutamyl-tRNA(Glu): step 2/2. In Pyrobaculum calidifontis (strain DSM 21063 / JCM 11548 / VA1), this protein is Glutamate-1-semialdehyde 2,1-aminomutase.